The primary structure comprises 111 residues: Ghrelin (111 aa).

An N-terminal signal peptide occupies residues 1 to 26 (MRQMKRTAYIILLVCVLALWMDSVQA). Positions 28–37 (SSFLSPSQRP) are enriched in polar residues. Residues 28–53 (SSFLSPSQRPQGKDKKPPRVGRRDSD) are disordered. S29 carries O-decanoyl serine; alternate lipidation. S29 carries the O-hexanoyl serine; alternate lipid modification. S29 is lipidated: O-octanoyl serine; alternate. The span at 38 to 53 (QGKDKKPPRVGRRDSD) shows a compositional bias: basic and acidic residues. A Valine amide modification is found at V47. Residues 51-111 (DSDGILDLFM…DLLMDTPAKE (61 aa)) constitute a propeptide, removed in mature form.

Belongs to the motilin family. O-octanoylated by GOAT/MBOAT4. O-octanoylation or O-decanoylation is essential for activity. The O-decanoylated form ghrelin-21-C10 differs in the length of the carbon backbone of the carboxylic acid forming an ester bond with Ser-29. 44% of eel ghrelin is O-decanoylated. Highest levels in stomach and anterior intestine. Lower levels in posterior intestine, kidney and brain. Low levels in heart, head kidney and middle intestine.

It localises to the secreted. Its function is as follows. Ligand for growth hormone secretagogue receptor type 1 (GHSR). Induces the release of growth hormone from the pituitary. Has an appetite-stimulating effect, induces adiposity and stimulates gastric acid secretion. Involved in growth regulation. The polypeptide is Ghrelin (ghrl) (Anguilla japonica (Japanese eel)).